Here is a 1368-residue protein sequence, read N- to C-terminus: DNA-directed RNA polymerase subunit beta (1368 aa).

The protein belongs to the RNA polymerase beta chain family. In terms of assembly, the RNAP catalytic core consists of 2 alpha, 1 beta, 1 beta' and 1 omega subunit. When a sigma factor is associated with the core the holoenzyme is formed, which can initiate transcription.

The enzyme catalyses RNA(n) + a ribonucleoside 5'-triphosphate = RNA(n+1) + diphosphate. In terms of biological role, DNA-dependent RNA polymerase catalyzes the transcription of DNA into RNA using the four ribonucleoside triphosphates as substrates. This chain is DNA-directed RNA polymerase subunit beta, found in Ralstonia pickettii (strain 12J).